The sequence spans 95 residues: Antitoxin VapB (95 aa).

Functionally, antitoxin component of a type II toxin-antitoxin (TA) system. Partially neutralizes the RNase activity of cognate toxin VapC. The chain is Antitoxin VapB from Rickettsia bellii (strain RML369-C).